We begin with the raw amino-acid sequence, 78 residues long: Large ribosomal subunit protein bL28 (78 aa).

Residues 1–22 form a disordered region; that stretch reads MAKVCQVTGKRPVTGHNVSHAK.

Belongs to the bacterial ribosomal protein bL28 family.

In Saccharophagus degradans (strain 2-40 / ATCC 43961 / DSM 17024), this protein is Large ribosomal subunit protein bL28.